Here is a 91-residue protein sequence, read N- to C-terminus: Hepcidin-1 (91 aa).

Positions Met-1–Ala-24 are cleaved as a signal peptide. The propeptide occupies Val-25–Thr-64. Intrachain disulfides connect Cys-73–Cys-89, Cys-76–Cys-79, Cys-77–Cys-85, and Cys-80–Cys-88.

The protein belongs to the hepcidin family.

The protein resides in the secreted. Its function is as follows. Seems to act as a signaling molecule involved in the maintenance of iron homeostasis. Seems to be required in conjunction with HFE to regulate both intestinal iron absorption and iron storage in macrophages. May also have antimicrobial activity. This Danio rerio (Zebrafish) protein is Hepcidin-1 (hamp1).